Here is a 333-residue protein sequence, read N- to C-terminus: DNA-directed RNA polymerase subunit alpha (333 aa).

Residues 1–234 (MQSSVNEFLT…QQLAAFVDLK (234 aa)) form an alpha N-terminal domain (alpha-NTD) region. The interval 248–333 (IDPILLRPVD…SLKKDDKATA (86 aa)) is alpha C-terminal domain (alpha-CTD).

This sequence belongs to the RNA polymerase alpha chain family. In terms of assembly, homodimer. The RNAP catalytic core consists of 2 alpha, 1 beta, 1 beta' and 1 omega subunit. When a sigma factor is associated with the core the holoenzyme is formed, which can initiate transcription.

It catalyses the reaction RNA(n) + a ribonucleoside 5'-triphosphate = RNA(n+1) + diphosphate. DNA-dependent RNA polymerase catalyzes the transcription of DNA into RNA using the four ribonucleoside triphosphates as substrates. This chain is DNA-directed RNA polymerase subunit alpha, found in Pseudomonas aeruginosa (strain UCBPP-PA14).